The primary structure comprises 305 residues: Acetyl-coenzyme A carboxylase carboxyl transferase subunit alpha (305 aa).

The 248-residue stretch at 33–280 folds into the CoA carboxyltransferase C-terminal domain; the sequence is AKLESSTALS…KEQILKDLAD (248 aa).

Belongs to the AccA family. In terms of assembly, acetyl-CoA carboxylase is a heterohexamer composed of biotin carboxyl carrier protein (AccB), biotin carboxylase (AccC) and two subunits each of ACCase subunit alpha (AccA) and ACCase subunit beta (AccD).

It localises to the cytoplasm. The enzyme catalyses N(6)-carboxybiotinyl-L-lysyl-[protein] + acetyl-CoA = N(6)-biotinyl-L-lysyl-[protein] + malonyl-CoA. Its pathway is lipid metabolism; malonyl-CoA biosynthesis; malonyl-CoA from acetyl-CoA: step 1/1. Its function is as follows. Component of the acetyl coenzyme A carboxylase (ACC) complex. First, biotin carboxylase catalyzes the carboxylation of biotin on its carrier protein (BCCP) and then the CO(2) group is transferred by the carboxyltransferase to acetyl-CoA to form malonyl-CoA. This is Acetyl-coenzyme A carboxylase carboxyl transferase subunit alpha from Treponema denticola (strain ATCC 35405 / DSM 14222 / CIP 103919 / JCM 8153 / KCTC 15104).